The sequence spans 434 residues: D-amino acid dehydrogenase (434 aa).

FAD is bound at residue 3–17 (VIVLGSGVIGTTTAY).

Belongs to the DadA oxidoreductase family. It depends on FAD as a cofactor.

The catalysed reaction is a D-alpha-amino acid + A + H2O = a 2-oxocarboxylate + AH2 + NH4(+). Its pathway is amino-acid degradation; D-alanine degradation; NH(3) and pyruvate from D-alanine: step 1/1. Functionally, oxidative deamination of D-amino acids. The protein is D-amino acid dehydrogenase of Bordetella petrii (strain ATCC BAA-461 / DSM 12804 / CCUG 43448).